A 345-amino-acid chain; its full sequence is uncharacterized protein (345 aa).

It belongs to the Gfo/Idh/MocA family. Biliverdin reductase subfamily.

This is an uncharacterized protein from Escherichia coli (strain K12).